The chain runs to 744 residues: Prestin (744 aa).

Residues 1–75 (MDHAEENEIL…PITKWLPAYK (75 aa)) are Cytoplasmic-facing. The chain crosses the membrane as a helical span at residues 76-105 (FKEYVLGDLVSGISTGVLQLPQGLAFAMLA). At 106-108 (AVP) the chain is on the extracellular side. Residues 109-126 (PIFGLYSSFYPVIMYCFL) form a helical membrane-spanning segment. The Cytoplasmic segment spans residues 127–137 (GTSRHISIGPF). Residues 138-151 (AVISLMIGGVAVRL) traverse the membrane as a helical segment. The Extracellular segment spans residues 152–168 (VPDDIVIPGGVNATNGT). An Involved in motor function motif is present at residues 158 to 168 (IPGGVNATNGT). Asn-163 and Asn-166 each carry an N-linked (GlcNAc...) asparagine glycan. Residues 169 to 196 (EARDALRVKVAMSVTLLSGIIQFCLGVC) form a helical membrane-spanning segment. Residues 197 to 206 (RFGFVAIYLT) lie on the Cytoplasmic side of the membrane. The helical transmembrane segment at 207-230 (EPLVRGFTTAAAVHVFTSMLKYLF) threads the bilayer. At 231–241 (GVKTKRYSGIF) the chain is on the extracellular side. Positions 242 to 253 (SVVYSTVAVLQN) form an intramembrane region, helical. Residues 254-258 (VKNLN) lie on the Extracellular side of the membrane. A helical transmembrane segment spans residues 259 to 282 (VCSLGVGLMVFGLLLGGKEFNERF). The Cytoplasmic portion of the chain corresponds to 283–291 (KEKLPAPIP). A helical membrane pass occupies residues 292–307 (LEFFAVVMGTGISAGF). The Extracellular segment spans residues 308 to 332 (NLKESYNVDVVGTLPLGLLPPANPD). The chain crosses the membrane as a helical span at residues 333 to 367 (TSLFHLVYVDAIAIAIVGFSVTISMAKTLANKHGY). The Cytoplasmic portion of the chain corresponds to 368–370 (QVD). A helical transmembrane segment spans residues 371 to 388 (GNQELIALGLCNSIGSLF). Over 389–396 (QTFSISCS) the chain is Extracellular. Residues 397 to 406 (LSRSLVQEGT) form a helical membrane-spanning segment. Ser-398 lines the salicylate pocket. Over 407–410 (GGKT) the chain is Cytoplasmic. The helical transmembrane segment at 411–432 (QLAGCLASLMILLVILATGFLF) threads the bilayer. Topologically, residues 433–436 (ESLP) are extracellular. The helical transmembrane segment at 437–464 (QAVLSAIVIVNLKGMFMQFSDLPFFWRT) threads the bilayer. Ser-465 is a topological domain (cytoplasmic). Residues 466–481 (KIELTIWLTTFVSSLF) traverse the membrane as a helical segment. The Extracellular segment spans residues 482–483 (LG). A helical transmembrane segment spans residues 484–504 (LDYGLITAVIIALLTVIYRTQ). An extended region for STAS domain region spans residues 505 to 718 (SPSYKVLGKL…AVLGSQLREA (214 aa)). Residues 505 to 744 (SPSYKVLGKL…PNATPATPEA (240 aa)) lie on the Cytoplasmic side of the membrane. The STAS domain maps to 525–713 (AYEEVKEIPG…HSIHDAVLGS (189 aa)). Positions 718–744 (ALAEQEASAPPSQEDLEPNATPATPEA) are disordered.

The protein belongs to the SLC26A/SulP transporter (TC 2.A.53) family. In terms of assembly, homodimer. Interacts (via STAS domain) with CALM; this interaction is calcium-dependent and the STAS domain interacts with only one lobe of CALM which is an elongated conformation. Interacts with MYH1.

Its subcellular location is the lateral cell membrane. The enzyme catalyses 2 hydrogencarbonate(in) + chloride(out) = 2 hydrogencarbonate(out) + chloride(in). In terms of biological role, voltage-sensitive motor protein that drives outer hair cell (OHC) electromotility (eM) and participates in sound amplification in the hearing organ. Converts changes in the transmembrane electric potential into mechanical displacements resulting in the coupling of its expansion to movement of a charged voltage sensor across the lipid membrane. The nature of the voltage sensor is not completely clear, and two models compete. In the first model, acts as an incomplete transporter where intracellular chloride anion acts as extrinsic voltage sensor that drives conformational change in the protein which is sufficient to produce a length change in the plane of the membrane and hence in the length of the OHC. The second model in which multiple charged amino acid residues are distributed at the intracellular and extracellular membrane interfaces that form an intrinsic voltage sensor, whose movement produces the non-linear capacitance (NLC). However, the effective voltage sensor may be the result of a hybrid voltage sensor, assembled from intrinsic charge (charged residues) and extrinsic charge (bound anion). Notably, binding of anions to the anion-binding pocket partially neutralizes the intrinsic positive charge rather than to form an electrically negative sensor, therefore remaining charge may serve as voltage sensor that, after depolarization, moves from down (expanded state) to up (contracted) conformation, which is accompanied by an eccentric contraction of the intermembrane cross-sectional area of the protein as well as a major increase in the hydrophobic thickness of the protein having as consequences the plasma membrane thickening and the cell contraction after membrane depolarization. The anion-binding pocket transits from the inward-open (Down) state, where it is exposed toward the intracellular solvent in the absence of anion, to the occluded (Up) state upon anion binding. Salicylate competes for the anion-binding site and inhibits the voltage-sensor movement, and therefore inhibits the charge transfer and electromotility by displacing Cl(-) from the anion-binding site and by preventing the structural transitions to the contracted state. In addition, can act as a weak Cl(-)/HCO3(-) antiporter across the cell membrane and so regulate the intracellular pH of the outer hair cells (OHCs), while firstly found as being unable to mediate electrogenic anion transport. Moreover, supports a role in cardiac mechanical amplification serving as an elastic element to enhance the actomyosin- based sarcomere contraction system. This Homo sapiens (Human) protein is Prestin.